Reading from the N-terminus, the 2201-residue chain is Activating signal cointegrator 1 complex subunit 3 (2201 aa).

Phosphoserine is present on Ser12. 2 coiled-coil regions span residues 18 to 81 and 328 to 356; these read KQDN…KQIV and IQSE…KAGE. The region spanning 486-669 is the Helicase ATP-binding 1 domain; sequence ETAYNTNENM…FLHVNPCIGL (184 aa). An ATP-binding site is contributed by 499 to 506; sequence APTGAGKT. Lys572 bears the N6-acetyllysine mark. The DEVH box motif lies at 611 to 614; sequence DEVH. The Helicase C-terminal 1 domain occupies 696-914; it reads QLNNMDEVCY…GTVTNVEEAV (219 aa). The SEC63 1 domain occupies 978-1287; the sequence is STDLGRTASH…GAEAVCIINF (310 aa). The Helicase ATP-binding 2 domain occupies 1336 to 1511; that stretch reads HTLYHTDCNV…WLNIRQMGLF (176 aa). 1349–1356 provides a ligand contact to ATP; that stretch reads APTGSGKT. The DEIH box signature appears at 1453–1456; the sequence is DEIH. The 196-residue stretch at 1544–1739 folds into the Helicase C-terminal 2 domain; the sequence is PTFQAIRSHS…VLSDHLNAEI (196 aa). An SEC63 2 domain is found at 1812–2176; sequence PLTYGRIASY…LGLDQQYDIH (365 aa).

This sequence belongs to the helicase family. As to quaternary structure, identified in the ASCC complex that contains ASCC1, ASCC2 and ASCC3. Functions as a scaffolding subunit that interacts directly with both ASCC1 and ASCC2. Interacts directly with ALKBH3, and thereby recruits ALKBH3 to the ASCC complex. Part of the ASC-1/TRIP4 complex, that contains TRIP4, ASCC1, ASCC2 and ASCC3. Part of the RQT (ribosome quality control trigger) complex, that contains ASCC2, ASCC3 and TRIP4. Associates with ribosomes; recruited to collided ribosomes. Interacts with ZCCHC4. Interacts with ZNF598. Interacts with RPS3.

The protein resides in the nucleus. It localises to the nucleus speckle. Its subcellular location is the cytoplasm. The protein localises to the cytosol. It catalyses the reaction Couples ATP hydrolysis with the unwinding of duplex DNA by translocating in the 3'-5' direction.. The catalysed reaction is ATP + H2O = ADP + phosphate + H(+). Its function is as follows. ATPase involved both in DNA repair and rescue of stalled ribosomes. 3'-5' DNA helicase involved in repair of alkylated DNA: promotes DNA unwinding to generate single-stranded substrate needed for ALKBH3, enabling ALKBH3 to process alkylated N3-methylcytosine (3mC) within double-stranded regions. Also involved in activation of the ribosome quality control (RQC) pathway, a pathway that degrades nascent peptide chains during problematic translation. Drives the splitting of stalled ribosomes that are ubiquitinated in a ZNF598-dependent manner, as part of the ribosome quality control trigger (RQT) complex. Part of the ASC-1 complex that enhances NF-kappa-B, SRF and AP1 transactivation. This is Activating signal cointegrator 1 complex subunit 3 (ascc3) from Bos taurus (Bovine).